A 177-amino-acid polypeptide reads, in one-letter code: Large ribosomal subunit protein uL6 (177 aa).

Belongs to the universal ribosomal protein uL6 family. In terms of assembly, part of the 50S ribosomal subunit.

Its function is as follows. This protein binds to the 23S rRNA, and is important in its secondary structure. It is located near the subunit interface in the base of the L7/L12 stalk, and near the tRNA binding site of the peptidyltransferase center. The polypeptide is Large ribosomal subunit protein uL6 (Alteromonas mediterranea (strain DSM 17117 / CIP 110805 / LMG 28347 / Deep ecotype)).